The primary structure comprises 272 residues: Small ribosomal subunit protein uS2 (272 aa).

The disordered stretch occupies residues 238 to 272; that stretch reads ASKEEQTEEAEEETLSSKYREQDFQEAKSGARGEK. Residues 255–272 show a composition bias toward basic and acidic residues; it reads KYREQDFQEAKSGARGEK.

Belongs to the universal ribosomal protein uS2 family.

The chain is Small ribosomal subunit protein uS2 from Protochlamydia amoebophila (strain UWE25).